A 648-amino-acid polypeptide reads, in one-letter code: Phosphomethylpyrimidine synthase (648 aa).

Residues Asn253, Met282, Tyr311, His347, 367 to 369, 408 to 411, and Glu447 contribute to the substrate site; these read SRG and DGLR. His451 lines the Zn(2+) pocket. Residue Tyr474 coordinates substrate. Residue His515 participates in Zn(2+) binding. [4Fe-4S] cluster contacts are provided by Cys595, Cys598, and Cys603.

Belongs to the ThiC family. In terms of assembly, homodimer. [4Fe-4S] cluster is required as a cofactor.

It catalyses the reaction 5-amino-1-(5-phospho-beta-D-ribosyl)imidazole + S-adenosyl-L-methionine = 4-amino-2-methyl-5-(phosphooxymethyl)pyrimidine + CO + 5'-deoxyadenosine + formate + L-methionine + 3 H(+). Its pathway is cofactor biosynthesis; thiamine diphosphate biosynthesis. In terms of biological role, catalyzes the synthesis of the hydroxymethylpyrimidine phosphate (HMP-P) moiety of thiamine from aminoimidazole ribotide (AIR) in a radical S-adenosyl-L-methionine (SAM)-dependent reaction. This is Phosphomethylpyrimidine synthase from Burkholderia thailandensis (strain ATCC 700388 / DSM 13276 / CCUG 48851 / CIP 106301 / E264).